A 300-amino-acid chain; its full sequence is Acetylglutamate kinase (300 aa).

Substrate contacts are provided by residues Gly-72–Gly-73, Arg-94, and Asn-197.

It belongs to the acetylglutamate kinase family. ArgB subfamily.

The protein localises to the cytoplasm. The enzyme catalyses N-acetyl-L-glutamate + ATP = N-acetyl-L-glutamyl 5-phosphate + ADP. It participates in amino-acid biosynthesis; L-arginine biosynthesis; N(2)-acetyl-L-ornithine from L-glutamate: step 2/4. Its function is as follows. Catalyzes the ATP-dependent phosphorylation of N-acetyl-L-glutamate. The sequence is that of Acetylglutamate kinase from Aromatoleum aromaticum (strain DSM 19018 / LMG 30748 / EbN1) (Azoarcus sp. (strain EbN1)).